The following is a 114-amino-acid chain: Large ribosomal subunit protein bL19 (114 aa).

This sequence belongs to the bacterial ribosomal protein bL19 family.

In terms of biological role, this protein is located at the 30S-50S ribosomal subunit interface and may play a role in the structure and function of the aminoacyl-tRNA binding site. The sequence is that of Large ribosomal subunit protein bL19 from Heliobacterium modesticaldum (strain ATCC 51547 / Ice1).